The chain runs to 1297 residues: DNA-directed RNA polymerase subunit beta' (1297 aa).

Zn(2+)-binding residues include Cys60, Cys62, Cys75, and Cys78. Mg(2+) is bound by residues Asp535, Asp537, and Asp539. 4 residues coordinate Zn(2+): Cys883, Cys961, Cys968, and Cys971.

The protein belongs to the RNA polymerase beta' chain family. As to quaternary structure, the RNAP catalytic core consists of 2 alpha, 1 beta, 1 beta' and 1 omega subunit. When a sigma factor is associated with the core the holoenzyme is formed, which can initiate transcription. Requires Mg(2+) as cofactor. Zn(2+) is required as a cofactor.

The catalysed reaction is RNA(n) + a ribonucleoside 5'-triphosphate = RNA(n+1) + diphosphate. Functionally, DNA-dependent RNA polymerase catalyzes the transcription of DNA into RNA using the four ribonucleoside triphosphates as substrates. In Salinispora arenicola (strain CNS-205), this protein is DNA-directed RNA polymerase subunit beta'.